The primary structure comprises 369 residues: MFCVAPPELETKMNITKGGLVLFSANSNSSCMELSKKIAERLGVEMGKVQVYQEPNRETRVQIQESVRGKDVFIIQTISKDVNTTIMELLIMVYACKTSCAKSIIGVIPYFPYSKQCKMRKRGSIVSKLLASMMCKAGLTHLITMDLHQKEIQGFFNIPVDNLRASPFLLQYIQEEIPDYRNAVIVAKSPASAKRAQSFAERLRLGIAVIHGEAQDAESDLVDGRHSPPMVRSVAAIHPSLEIPMLIPKEKPPITVVGDVGGRIAIIVDDIIDDVDSFLAAAETLKERGAYKIFVMATHGLLSSDAPRLIEESAIDEVVVTNTIPHEIQKLQCPKIKTVDISMILSEAIRRIHNGESMSYLFRNIGLDD.

M1 carries the N-acetylmethionine modification. Phosphoserine is present on residues S219, S227, and S233.

Belongs to the ribose-phosphate pyrophosphokinase family. Binds to PRPS1 and PRPS2.

Its function is as follows. Seems to play a negative regulatory role in 5-phosphoribose 1-diphosphate synthesis. The chain is Phosphoribosyl pyrophosphate synthase-associated protein 2 (Prpsap2) from Mus musculus (Mouse).